A 514-amino-acid polypeptide reads, in one-letter code: GMP synthase [glutamine-hydrolyzing] (514 aa).

The Glutamine amidotransferase type-1 domain maps to 9-199; the sequence is MILVLDFGGQ…LFEVCQCTGD (191 aa). The active-site Nucleophile is the Cys86. Active-site residues include His173 and Glu175. Residues 200–389 enclose the GMPS ATP-PPase domain; the sequence is WSMENFIEIE…LGLSDEIVWR (190 aa). 227-233 is a binding site for ATP; the sequence is SGGVDSS.

As to quaternary structure, homodimer.

It carries out the reaction XMP + L-glutamine + ATP + H2O = GMP + L-glutamate + AMP + diphosphate + 2 H(+). It functions in the pathway purine metabolism; GMP biosynthesis; GMP from XMP (L-Gln route): step 1/1. Functionally, catalyzes the synthesis of GMP from XMP. This is GMP synthase [glutamine-hydrolyzing] from Exiguobacterium sibiricum (strain DSM 17290 / CCUG 55495 / CIP 109462 / JCM 13490 / 255-15).